A 142-amino-acid chain; its full sequence is MLKFRKRGQISLEFSLLFLGVLLAIVIAVGYPGMFGFNKTVSISSMSLAHAAVSKMKQNIELVSSADEGTMKIVYIKCPPGTWGANNNILYFYRDGNIKFNITAKCDINIILNGNKTVSTPKIIIANITKIDETHVIVTLYQ.

Positions Met-1–Gly-8 are excised as a propeptide. The QXSXEXXXL motif lies at Gln-9–Leu-17.

In terms of processing, the N-terminus is cleaved by the prepilin peptidase EppA, which recognizes the class III signal sequence.

The protein localises to the secreted. Its subcellular location is the cell surface. It localises to the fimbrium. This Methanocaldococcus jannaschii (strain ATCC 43067 / DSM 2661 / JAL-1 / JCM 10045 / NBRC 100440) (Methanococcus jannaschii) protein is Probable pilin MJ0832.1.